The sequence spans 293 residues: 4-hydroxy-tetrahydrodipicolinate synthase (293 aa).

Thr-45 contributes to the pyruvate binding site. Tyr-133 (proton donor/acceptor) is an active-site residue. Lys-161 acts as the Schiff-base intermediate with substrate in catalysis. Position 204 (Ile-204) interacts with pyruvate.

It belongs to the DapA family. As to quaternary structure, homotetramer; dimer of dimers.

It localises to the cytoplasm. The enzyme catalyses L-aspartate 4-semialdehyde + pyruvate = (2S,4S)-4-hydroxy-2,3,4,5-tetrahydrodipicolinate + H2O + H(+). The protein operates within amino-acid biosynthesis; L-lysine biosynthesis via DAP pathway; (S)-tetrahydrodipicolinate from L-aspartate: step 3/4. In terms of biological role, catalyzes the condensation of (S)-aspartate-beta-semialdehyde [(S)-ASA] and pyruvate to 4-hydroxy-tetrahydrodipicolinate (HTPA). This chain is 4-hydroxy-tetrahydrodipicolinate synthase, found in Yersinia pseudotuberculosis serotype O:1b (strain IP 31758).